Consider the following 234-residue polypeptide: MAEPGPEPGRAWRLLALCGAAVFLAAAAAGGALVAWNLAASTARSPRCPEPEQMNATVRPPDSAPEVEELRRRLAEAEQAQENLVWQLQRAEGDKRELEAALKACKDSQSRLQTQLKALKIEMDQAKVRGTQMGLENGMLTEALVRWEATATESKQQLEEALQRAGAAEAAGEACVSREVALREHIYALEAELGTLRKESRLRPRSGSRTKPSISHRPKSGSTKGCRRPPRDPQ.

An N-terminal signal peptide occupies residues 1–43 (MAEPGPEPGRAWRLLALCGAAVFLAAAAAGGALVAWNLAASTA). The tract at residues 44 to 63 (RSPRCPEPEQMNATVRPPDS) is disordered. The stretch at 67-171 (VEELRRRLAE…LQRAGAAEAA (105 aa)) forms a coiled coil. A disordered region spans residues 194-234 (GTLRKESRLRPRSGSRTKPSISHRPKSGSTKGCRRPPRDPQ). Positions 203-219 (RPRSGSRTKPSISHRPK) are enriched in basic residues.

The polypeptide is Coiled-coil domain-containing protein 194 (Mus musculus (Mouse)).